A 351-amino-acid polypeptide reads, in one-letter code: Biotin synthase (351 aa).

The Radical SAM core domain maps to 42-269 (NEVQVSTLLS…KSHVRLSAGR (228 aa)). 3 residues coordinate [4Fe-4S] cluster: Cys57, Cys61, and Cys64. The [2Fe-2S] cluster site is built by Cys101, Cys132, Cys192, and Arg264.

Belongs to the radical SAM superfamily. Biotin synthase family. As to quaternary structure, homodimer. Requires [4Fe-4S] cluster as cofactor. It depends on [2Fe-2S] cluster as a cofactor.

It carries out the reaction (4R,5S)-dethiobiotin + (sulfur carrier)-SH + 2 reduced [2Fe-2S]-[ferredoxin] + 2 S-adenosyl-L-methionine = (sulfur carrier)-H + biotin + 2 5'-deoxyadenosine + 2 L-methionine + 2 oxidized [2Fe-2S]-[ferredoxin]. The protein operates within cofactor biosynthesis; biotin biosynthesis; biotin from 7,8-diaminononanoate: step 2/2. Its function is as follows. Catalyzes the conversion of dethiobiotin (DTB) to biotin by the insertion of a sulfur atom into dethiobiotin via a radical-based mechanism. This Psychromonas ingrahamii (strain DSM 17664 / CCUG 51855 / 37) protein is Biotin synthase.